A 259-amino-acid chain; its full sequence is L-erythrulose-1-phosphate isomerase (259 aa).

H102 serves as the catalytic Electrophile. The active-site Proton acceptor is the E174.

This sequence belongs to the triosephosphate isomerase family.

It catalyses the reaction L-erythrulose 1-phosphate = D-erythrulose 4-phosphate. It functions in the pathway carbohydrate metabolism. In terms of biological role, involved in catabolism of D-apiose. Catalyzes the isomerization of L-erythrulose 1-phosphate to D-erythrulose 4-phosphate. The protein is L-erythrulose-1-phosphate isomerase of Pectobacterium atrosepticum (strain SCRI 1043 / ATCC BAA-672) (Erwinia carotovora subsp. atroseptica).